Reading from the N-terminus, the 240-residue chain is Inhibitor of growth protein 5 (240 aa).

The segment at 115-165 is disordered; it reads MDGSDFESTGARSLKKGRSQKEKRSSRGRGRRTSEEDTPKKKKHKSGSEFT. Ser118 bears the Phosphoserine mark. An Omega-N-methylarginine modification is found at Arg126. A PHD-type zinc finger spans residues 186-235; it reads PTYCLCHQVSYGEMIGCDNPDCPIEWFHFACVDLTTKPKGKWFCPRCVQE. Residues Cys189, Cys191, Cys202, Cys207, His213, Cys216, Cys229, and Cys232 each coordinate Zn(2+).

Belongs to the ING family. As to quaternary structure, component of the HBO1 complex composed of KAT7/HBO1, MEAF6, ING5, and one scaffold subunit: complexes containing BRPF scaffold (BRPF1, BRD1/BRPF2 or BRPF3) direct KAT7/HBO1 specificity towards H3K14ac, while complexes containing JADE scaffold (JADE1, JADE2 and JADE3) mediate acetylation of histone H4. Component of the MOZ/MORF complex composed at least of ING5, KAT6A, KAT6B, MEAF6 and one of BRPF1, BRD1/BRPF2 and BRPF3. Interacts with H3K4me3 and to a lesser extent with H3K4me2. Interacts with EP300 and p53/TP53. Interacts with INCA1.

Its subcellular location is the nucleus. It is found in the chromosome. In terms of biological role, component of the HBO1 complex, which specifically mediates acetylation of histone H3 at 'Lys-14' (H3K14ac) and, to a lower extent, acetylation of histone H4. Component of the MOZ/MORF complex which has a histone H3 acetyltransferase activity. Through chromatin acetylation it may regulate DNA replication and may function as a transcriptional coactivator. Inhibits cell growth, induces a delay in S-phase progression and enhances Fas-induced apoptosis in an INCA1-dependent manner. The protein is Inhibitor of growth protein 5 (Ing5) of Mus musculus (Mouse).